A 335-amino-acid polypeptide reads, in one-letter code: Pyridoxal 5'-phosphate synthase subunit PdxS (335 aa).

Asp-30 serves as a coordination point for D-ribose 5-phosphate. Lys-87 serves as the catalytic Schiff-base intermediate with D-ribose 5-phosphate. Gly-159 contacts D-ribose 5-phosphate. Arg-171 provides a ligand contact to D-glyceraldehyde 3-phosphate. D-ribose 5-phosphate is bound by residues Gly-257 and 278-279 (GS).

This sequence belongs to the PdxS/SNZ family. In terms of assembly, in the presence of PdxT, forms a dodecamer of heterodimers.

The catalysed reaction is aldehydo-D-ribose 5-phosphate + D-glyceraldehyde 3-phosphate + L-glutamine = pyridoxal 5'-phosphate + L-glutamate + phosphate + 3 H2O + H(+). Its pathway is cofactor biosynthesis; pyridoxal 5'-phosphate biosynthesis. In terms of biological role, catalyzes the formation of pyridoxal 5'-phosphate from ribose 5-phosphate (RBP), glyceraldehyde 3-phosphate (G3P) and ammonia. The ammonia is provided by the PdxT subunit. Can also use ribulose 5-phosphate and dihydroxyacetone phosphate as substrates, resulting from enzyme-catalyzed isomerization of RBP and G3P, respectively. This Pyrococcus furiosus (strain ATCC 43587 / DSM 3638 / JCM 8422 / Vc1) protein is Pyridoxal 5'-phosphate synthase subunit PdxS.